A 463-amino-acid chain; its full sequence is ATP-dependent protease ATPase subunit HslU (463 aa).

ATP is bound by residues Val21, 63-68, Asp276, Glu341, and Arg413; that span reads GVGKTE.

It belongs to the ClpX chaperone family. HslU subfamily. As to quaternary structure, a double ring-shaped homohexamer of HslV is capped on each side by a ring-shaped HslU homohexamer. The assembly of the HslU/HslV complex is dependent on binding of ATP.

It localises to the cytoplasm. ATPase subunit of a proteasome-like degradation complex; this subunit has chaperone activity. The binding of ATP and its subsequent hydrolysis by HslU are essential for unfolding of protein substrates subsequently hydrolyzed by HslV. HslU recognizes the N-terminal part of its protein substrates and unfolds these before they are guided to HslV for hydrolysis. The polypeptide is ATP-dependent protease ATPase subunit HslU (Thermotoga sp. (strain RQ2)).